The chain runs to 347 residues: NADH-ubiquinone oxidoreductase chain 2 (347 aa).

The next 11 membrane-spanning stretches (helical) occupy residues 3–23, 25–45, 59–79, 96–116, 127–147, 149–169, 178–198, 201–221, 239–259, 274–294, and 326–346; these read PMTF…VLLS, HWFM…PVLM, YFLT…INTM, ILIT…FWVP, GLIL…QIYP, LNTN…GWGG, IMAY…TYNP, SLLN…LLII, IVTT…PLTG, NSLI…FFYM, and TAPL…LITL.

Belongs to the complex I subunit 2 family. As to quaternary structure, core subunit of respiratory chain NADH dehydrogenase (Complex I) which is composed of 45 different subunits. Interacts with TMEM242.

The protein resides in the mitochondrion inner membrane. The enzyme catalyses a ubiquinone + NADH + 5 H(+)(in) = a ubiquinol + NAD(+) + 4 H(+)(out). In terms of biological role, core subunit of the mitochondrial membrane respiratory chain NADH dehydrogenase (Complex I) which catalyzes electron transfer from NADH through the respiratory chain, using ubiquinone as an electron acceptor. Essential for the catalytic activity and assembly of complex I. In Sylvisorex ollula (Greater forest shrew), this protein is NADH-ubiquinone oxidoreductase chain 2.